The sequence spans 396 residues: Cystathionine beta-lyase (396 aa).

Position 211 is an N6-(pyridoxal phosphate)lysine (lysine 211).

This sequence belongs to the trans-sulfuration enzymes family. Homotetramer. The cofactor is pyridoxal 5'-phosphate.

The protein localises to the cytoplasm. It carries out the reaction L,L-cystathionine + H2O = L-homocysteine + pyruvate + NH4(+). The enzyme catalyses an S-substituted L-cysteine + H2O = a thiol + pyruvate + NH4(+). Its pathway is amino-acid biosynthesis; L-methionine biosynthesis via de novo pathway; L-homocysteine from L-cystathionine: step 1/1. Catalyzes the cleavage of cystathionine to homocysteine, pyruvate and ammonia during methionine biosynthesis. The sequence is that of Cystathionine beta-lyase (metC) from Haemophilus influenzae (strain ATCC 51907 / DSM 11121 / KW20 / Rd).